The primary structure comprises 505 residues: Alpha-ketoglutarate-dependent dioxygenase FTO (505 aa).

Thr4 carries the phosphothreonine modification. The tract at residues 32–327 (TPKDDEFYQQ…SSTHRVAECS (296 aa)) is fe2OG dioxygenase domain. Substrate is bound by residues Arg96 and Tyr108. Asn205 contacts 2-oxoglutarate. Positions 213–224 (PYLKEEPYFGMG) are loop L1; predicted to block binding of double-stranded DNA or RNA. Lys216 is subject to N6-acetyllysine. Fe cation-binding residues include His231 and Asp233. 231-234 (HHDE) provides a ligand contact to substrate. 2-oxoglutarate is bound at residue Tyr295. Residue His307 coordinates Fe cation. Residues 316-318 (RFS), Thr320, and Arg322 contribute to the 2-oxoglutarate site.

It belongs to the fto family. Monomer. May also exist as homodimer. The cofactor is Fe(2+).

It is found in the nucleus. The protein localises to the nucleus speckle. The protein resides in the cytoplasm. It carries out the reaction a 5'-end (N(7)-methyl 5'-triphosphoguanosine)-(N(6),2'-O-dimethyladenosine) in mRNA + 2-oxoglutarate + O2 = a 5'-end (N(7)-methyl 5'-triphosphoguanosine)-(2'-O-methyladenosine) in mRNA + formaldehyde + succinate + CO2. It catalyses the reaction an N(6)-methyladenosine in mRNA + 2-oxoglutarate + O2 = an adenosine in mRNA + formaldehyde + succinate + CO2. The catalysed reaction is N(6)-methyladenosine in U6 snRNA + 2-oxoglutarate + O2 = adenosine in U6 snRNA + formaldehyde + succinate + CO2. The enzyme catalyses a 5'-end (N(7)-methyl 5'-triphosphoguanosine)-(N(6),2'-O-dimethyladenosine) in U6 snRNA + 2-oxoglutarate + O2 = a 5'-end (N(7)-methyl 5'-triphosphoguanosine)-(2'-O-methyladenosine) in U6 snRNA + formaldehyde + succinate + CO2. It carries out the reaction an N(1)-methyladenosine in tRNA + 2-oxoglutarate + O2 = an adenosine in tRNA + formaldehyde + succinate + CO2. Its activity is regulated as follows. Activated by ascorbate. Inhibited by N-oxalylglycine, fumarate and succinate. Its function is as follows. RNA demethylase that mediates oxidative demethylation of different RNA species, such as mRNAs, tRNAs and snRNAs, and acts as a regulator of fat mass, adipogenesis and energy homeostasis. Specifically demethylates N(6)-methyladenosine (m6A) RNA, the most prevalent internal modification of messenger RNA (mRNA) in higher eukaryotes. M6A demethylation by FTO affects mRNA expression and stability. Also able to demethylate m6A in U6 small nuclear RNA (snRNA). Mediates demethylation of N(6),2'-O-dimethyladenosine cap (m6A(m)), by demethylating the N(6)-methyladenosine at the second transcribed position of mRNAs and U6 snRNA. Demethylation of m6A(m) in the 5'-cap by FTO affects mRNA stability by promoting susceptibility to decapping. Also acts as a tRNA demethylase by removing N(1)-methyladenine from various tRNAs. Has no activity towards 1-methylguanine. Has no detectable activity towards double-stranded DNA. Also able to repair alkylated DNA and RNA by oxidative demethylation: demethylates single-stranded RNA containing 3-methyluracil, single-stranded DNA containing 3-methylthymine and has low demethylase activity towards single-stranded DNA containing 1-methyladenine or 3-methylcytosine. Ability to repair alkylated DNA and RNA is however unsure in vivo. Involved in the regulation of fat mass, adipogenesis and body weight, thereby contributing to the regulation of body size and body fat accumulation. Involved in the regulation of thermogenesis and the control of adipocyte differentiation into brown or white fat cells. Regulates activity of the dopaminergic midbrain circuitry via its ability to demethylate m6A in mRNAs. The sequence is that of Alpha-ketoglutarate-dependent dioxygenase FTO from Pongo abelii (Sumatran orangutan).